We begin with the raw amino-acid sequence, 359 residues long: 3-dehydroquinate synthase (359 aa).

NAD(+) is bound by residues 70 to 75 (DGEQYK), 105 to 109 (GVIGD), 129 to 130 (TT), lysine 142, lysine 151, and 169 to 172 (FYKT). Zn(2+) contacts are provided by glutamate 184, histidine 247, and histidine 264.

This sequence belongs to the sugar phosphate cyclases superfamily. Dehydroquinate synthase family. It depends on Co(2+) as a cofactor. Zn(2+) is required as a cofactor. Requires NAD(+) as cofactor.

It localises to the cytoplasm. It catalyses the reaction 7-phospho-2-dehydro-3-deoxy-D-arabino-heptonate = 3-dehydroquinate + phosphate. Its pathway is metabolic intermediate biosynthesis; chorismate biosynthesis; chorismate from D-erythrose 4-phosphate and phosphoenolpyruvate: step 2/7. Catalyzes the conversion of 3-deoxy-D-arabino-heptulosonate 7-phosphate (DAHP) to dehydroquinate (DHQ). The sequence is that of 3-dehydroquinate synthase from Francisella tularensis subsp. tularensis (strain WY96-3418).